Consider the following 372-residue polypeptide: 12-oxophytodienoate reductase 1 (372 aa).

At M1 the chain carries N-acetylmethionine. FMN contacts are provided by residues 31 to 33 (PLT), A64, and Q106. H183 contributes to the substrate binding site. Y188 functions as the Proton donor in the catalytic mechanism. R235 provides a ligand contact to FMN. Position 275 (R275) interacts with substrate. FMN contacts are provided by residues 303–305 (AGG) and 326–327 (GR).

This sequence belongs to the NADH:flavin oxidoreductase/NADH oxidase family. Requires FMN as cofactor. In terms of tissue distribution, mostly expressed in roots, also present in leaves, shoots and flowers. More abundant in cotyledons. In more details, expressed in peduncles, sepals, petals, around the abscission zone of siliques, maturing siliques and developing seeds.

Its subcellular location is the cytoplasm. The catalysed reaction is (1S,2S)-OPC-8 + NADP(+) = (9S,13S,15Z)-12-oxophyto-10,15-dienoate + NADPH + H(+). Its pathway is lipid metabolism; oxylipin biosynthesis. Functionally, specifically cleaves olefinic bonds in alpha,beta-unsaturated carbonyls and may be involved in detoxification or modification of these reactive compounds. May be involved in the biosynthesis or metabolism of oxylipin signaling molecules. In vitro, reduces 9R,13R-12-oxophytodienoic acid (9R,13R-OPDA) to 9R,13R-OPC-8:0, but only poorly 9S,13S-OPDA, the natural precursor of jasmonic acid. Can detoxify the explosive 2,4,6-trinitrotoluene (TNT) in vitro and in vivo by catalyzing its nitroreduction to form hydroxylamino-dinitrotoluene (HADNT). The protein is 12-oxophytodienoate reductase 1 of Arabidopsis thaliana (Mouse-ear cress).